The chain runs to 504 residues: Alpha-L-arabinofuranosidase C (504 aa).

N-linked (GlcNAc...) asparagine glycosylation is found at asparagine 81, asparagine 152, asparagine 269, and asparagine 329.

This sequence belongs to the glycosyl hydrolase 51 family.

The protein localises to the secreted. The catalysed reaction is Hydrolysis of terminal non-reducing alpha-L-arabinofuranoside residues in alpha-L-arabinosides.. The protein operates within glycan metabolism; L-arabinan degradation. Functionally, alpha-L-arabinofuranosidase involved in the degradation of arabinoxylan, a major component of plant hemicellulose. Acts only on small linear 1,5-alpha-linked L-arabinofuranosyl oligosaccharides. This is Alpha-L-arabinofuranosidase C (abfC) from Emericella nidulans (strain FGSC A4 / ATCC 38163 / CBS 112.46 / NRRL 194 / M139) (Aspergillus nidulans).